The following is a 456-amino-acid chain: tRNA modification GTPase MnmE (456 aa).

(6S)-5-formyl-5,6,7,8-tetrahydrofolate is bound by residues Arg25, Glu87, and Arg126. The 157-residue stretch at Gly221–Asn377 folds into the TrmE-type G domain. Asn231 contributes to the K(+) binding site. Residues Asn231–Ser236, Thr250–Thr256, and Asp275–Gly278 each bind GTP. A Mg(2+)-binding site is contributed by Ser235. Thr250, Leu252, and Thr255 together coordinate K(+). Position 256 (Thr256) interacts with Mg(2+). Lys456 lines the (6S)-5-formyl-5,6,7,8-tetrahydrofolate pocket.

It belongs to the TRAFAC class TrmE-Era-EngA-EngB-Septin-like GTPase superfamily. TrmE GTPase family. Homodimer. Heterotetramer of two MnmE and two MnmG subunits. K(+) serves as cofactor.

It localises to the cytoplasm. Exhibits a very high intrinsic GTPase hydrolysis rate. Involved in the addition of a carboxymethylaminomethyl (cmnm) group at the wobble position (U34) of certain tRNAs, forming tRNA-cmnm(5)s(2)U34. The protein is tRNA modification GTPase MnmE of Synechocystis sp. (strain ATCC 27184 / PCC 6803 / Kazusa).